The sequence spans 431 residues: Phosphomethylpyrimidine synthase (431 aa).

Substrate contacts are provided by residues Asn66, Met95, Tyr124, His163, 185 to 187 (SRG), 226 to 229 (DGLR), and Glu265. Zn(2+) is bound at residue His269. Position 292 (Tyr292) interacts with substrate. His333 serves as a coordination point for Zn(2+). [4Fe-4S] cluster is bound by residues Cys408, Cys411, and Cys415.

Belongs to the ThiC family. [4Fe-4S] cluster is required as a cofactor.

It carries out the reaction 5-amino-1-(5-phospho-beta-D-ribosyl)imidazole + S-adenosyl-L-methionine = 4-amino-2-methyl-5-(phosphooxymethyl)pyrimidine + CO + 5'-deoxyadenosine + formate + L-methionine + 3 H(+). It participates in cofactor biosynthesis; thiamine diphosphate biosynthesis. Functionally, catalyzes the synthesis of the hydroxymethylpyrimidine phosphate (HMP-P) moiety of thiamine from aminoimidazole ribotide (AIR) in a radical S-adenosyl-L-methionine (SAM)-dependent reaction. In Dehalococcoides mccartyi (strain ATCC BAA-2100 / JCM 16839 / KCTC 5957 / BAV1), this protein is Phosphomethylpyrimidine synthase.